We begin with the raw amino-acid sequence, 142 residues long: Hemoglobin subunit alpha (142 aa).

Residues 2–142 (VLSPADKTNV…VSTVLTSKYR (141 aa)) enclose the Globin domain. Ser-4 bears the Phosphoserine mark. N6-succinyllysine is present on Lys-8. Thr-9 is modified (phosphothreonine). Lys-12 is modified (N6-succinyllysine). Lys-17 bears the N6-acetyllysine; alternate mark. Lys-17 carries the N6-succinyllysine; alternate modification. Tyr-25 carries the post-translational modification Phosphotyrosine. Ser-36 carries the phosphoserine modification. Lys-41 carries the N6-succinyllysine modification. A Phosphoserine modification is found at Ser-50. His-59 serves as a coordination point for O2. A heme b-binding site is contributed by His-88. Residue Ser-103 is modified to Phosphoserine. Thr-109 is subject to Phosphothreonine. Residues Ser-125 and Ser-132 each carry the phosphoserine modification. Residues Thr-135 and Thr-138 each carry the phosphothreonine modification. Residue Ser-139 is modified to Phosphoserine.

This sequence belongs to the globin family. In terms of assembly, heterotetramer of two alpha chains and two beta chains. In terms of tissue distribution, red blood cells.

Involved in oxygen transport from the lung to the various peripheral tissues. Functionally, hemopressin acts as an antagonist peptide of the cannabinoid receptor CNR1. Hemopressin-binding efficiently blocks cannabinoid receptor CNR1 and subsequent signaling. This chain is Hemoglobin subunit alpha (HBA), found in Piliocolobus badius (Western red colobus).